The sequence spans 253 residues: TCF3 fusion partner (253 aa).

Disordered stretches follow at residues 49 to 72 and 142 to 211; these read SGGL…GRRR and DEGS…PELA. Serine 167 is modified (phosphoserine). A compositionally biased stretch (pro residues) spans 170–181; that stretch reads RRTPAPPEPGSP. Phosphothreonine is present on threonine 172. Phosphoserine is present on residues serine 180 and serine 188. Threonine 207 is modified (phosphothreonine). Lysine 216 is covalently cross-linked (Glycyl lysine isopeptide (Lys-Gly) (interchain with G-Cter in SUMO2)). Positions 234–253 are disordered; sequence VSRGPDKLLPYPTLASPASD. 2 positions are modified to phosphoserine: serine 249 and serine 252.

Interacts with NOL3; translocates NOL3 into the nucleus and negatively regulated TFPT-induced cell death. Component of the chromatin remodeling INO80 complex; specifically part of a complex module associated with the N-terminus of INO80.

Its subcellular location is the nucleus. Appears to promote apoptosis in a p53/TP53-independent manner. Its function is as follows. Putative regulatory component of the chromatin remodeling INO80 complex which is involved in transcriptional regulation, DNA replication and probably DNA repair. This is TCF3 fusion partner (TFPT) from Homo sapiens (Human).